The following is a 776-amino-acid chain: Angiomotin-like protein 2 (776 aa).

A disordered region spans residues G41 to E88. A required for interaction with CDH5 region spans residues G101 to G307. The residue at position 107 (Y107) is a Phosphotyrosine. Disordered regions lie at residues A119–S142, R169–H215, and G283–A309. Residues H177–Q192 show a composition bias toward polar residues. Over residues P196–Y213 the composition is skewed to pro residues. A required for interaction with CDH1 region spans residues H220–G307. Positions A297–S306 are enriched in polar residues. Coiled coils occupy residues M314–R509 and A543–K570. Residues K347 and K408 each participate in a glycyl lysine isopeptide (Lys-Gly) (interchain with G-Cter in ubiquitin) cross-link. Disordered regions lie at residues Q591–H620 and T677–D743. Residues Q678–E687 are compositionally biased toward polar residues. S756 and S759 each carry phosphoserine. Positions E773–I776 match the PDZ-binding motif.

The protein belongs to the angiomotin family. As to quaternary structure, part of a complex composed of AMOTL2, MAGI1 and CDH5, within the complex AMOTL2 acts as a scaffold protein for the interaction of MAGI1 with CDH5. The complex is required for coupling actin fibers to cell junctions in endothelial cells. Within the complex AMOTL2 (via its N-terminus) interacts with CDH5. Interacts (via N-terminus) with MAGI1. Interacts (via N-terminus) with ACTB; the interaction facilitates binding of cell junction complexes to actin fibers in endothelial cells. Interacts with CDH1; the interaction may facilitate binding of radial actin fibers to cell junction complexes. Interacts with SRC. Interacts with YAP1; the interaction is required for ubiquitination of AMOTL2 and localization of YAP1 to tight junctions. Interacts with WWP1; the interaction facilitates WWP1 interaction with the Crumbs complex and subsequent WWP1 translocation to the plasma membrane. WPP1 interaction with the Crumbs complex promotes WPP1 monoubiquitination of AMOTL2 which subsequently activates the Hippo signaling pathway. When ubiquitinated interacts with LATS2 (via UBA domain); the interaction promotes LATS2 phosphorylation of YAP1. Interacts (via PPXY motif) with WWTR1/TAZ (via WW domain); the interaction promotes WWTR1/TAZ localization to the cytoplasm and thereby inhibition of its transcriptional properties. Interacts with PHLDB2; interaction may facilitate PHLDB2 localization to the myotube podosome cortex that surrounds the core. Monoubiquitinated at Lys-347 and Lys-408 by Crumbs complex-bound WWP1. De-ubiquitinated at Lys-347 and Lys-408 by USP9X; the interaction may be promoted by cell contact inhibition. Deubiquitination of AMOTL2 negatively regulates Hippo signaling activation. In terms of processing, phosphorylation at Tyr-107 is necessary for efficient binding to SRC and synergistically functioning with SRC to activate the downstream MAPK pathway.

The protein resides in the recycling endosome. The protein localises to the cytoplasm. It is found in the cell projection. Its subcellular location is the podosome. It localises to the cell junction. In terms of biological role, regulates the translocation of phosphorylated SRC to peripheral cell-matrix adhesion sites. Required for proper architecture of actin filaments. Plays a role in coupling actin fibers to cell junctions in endothelial cells and is therefore required for correct endothelial cell morphology via facilitating transcellular transmission of mechanical force resulting in endothelial cell elongation. Required for the anchoring of radial actin fibers to CDH1 junction complexes at the cell membrane which facilitates organization of radial actin fiber structure and cellular response to contractile forces. This contributes to maintenance of cell area, size, shape, epithelial sheet organization and trophectoderm cell properties that facilitate blastocyst zona hatching. Inhibits the Wnt/beta-catenin signaling pathway, probably by recruiting CTNNB1 to recycling endosomes and hence preventing its translocation to the nucleus. Participates in angiogenesis. Activates the Hippo signaling pathway in response to cell contact inhibition via interaction with and ubiquitination by Crumbs complex-bound WWP1. Ubiquitinated AMOTL2 then interacts with LATS2 which in turn phosphorylates YAP1, excluding it from the nucleus and localizing it to the cytoplasm and tight junctions, therefore ultimately repressing YAP1-driven transcription of target genes. Acts to inhibit WWTR1/TAZ transcriptional coactivator activity via sequestering WWTR1/TAZ in the cytoplasm and at tight junctions. Regulates the size and protein composition of the podosome cortex and core at myofibril neuromuscular junctions. Selectively promotes FGF-induced MAPK activation through SRC. May play a role in the polarity, proliferation and migration of endothelial cells. The chain is Angiomotin-like protein 2 from Canis lupus familiaris (Dog).